A 182-amino-acid polypeptide reads, in one-letter code: Ribosome maturation factor RimM (182 aa).

A PRC barrel domain is found at 99 to 176; sequence DDEYYHADLI…ELPAEIEGDT (78 aa).

This sequence belongs to the RimM family. Binds ribosomal protein uS19.

It localises to the cytoplasm. Its function is as follows. An accessory protein needed during the final step in the assembly of 30S ribosomal subunit, possibly for assembly of the head region. Essential for efficient processing of 16S rRNA. May be needed both before and after RbfA during the maturation of 16S rRNA. It has affinity for free ribosomal 30S subunits but not for 70S ribosomes. The chain is Ribosome maturation factor RimM from Rhodopseudomonas palustris (strain HaA2).